A 266-amino-acid polypeptide reads, in one-letter code: Type 1 encapsulin shell protein (266 aa).

It belongs to the encapsulin family. Family 1 subfamily. As to quaternary structure, this encapsulin nanocompartment is formed by 60 subunits; monomers form 12 pentamers which assemble to form shells. Shells are loaded with 4 encapsulated ferritin-like protein decamers (EncFtn) in a tetrahedral arrangement. A 3 nm gap is consistently seen between the shell and the cargo.

The protein resides in the encapsulin nanocompartment. In terms of biological role, shell component of a type 1 encapsulin nanocompartment. Assembles into proteinaceous shells about 21 nm in diameter. Small pores form at, or close to, the 2-, 3-, and 5-fold symmetry axes. Data analysis suggests the 5-fold pores open and close with maximal and minimal aperatures of 15 and 5 Angstroms. Cargo protein Fer (ferritin-like protein, probably stores iron) is targeted to the interior via its C-terminal extension; empty intact shells can be isolated in the absence of cargo protein. This is Type 1 encapsulin shell protein from Haliangium ochraceum (strain DSM 14365 / JCM 11303 / SMP-2).